Consider the following 60-residue polypeptide: Probable tautomerase SP_1017 (60 aa).

Pro-2 (proton acceptor; via imino nitrogen) is an active-site residue.

Belongs to the 4-oxalocrotonate tautomerase family.

This is Probable tautomerase SP_1017 from Streptococcus pneumoniae serotype 4 (strain ATCC BAA-334 / TIGR4).